A 232-amino-acid chain; its full sequence is Probable metallo-hydrolase M6_Spy0554 (232 aa).

H75, H77, D79, H80, H155, D174, and H215 together coordinate Zn(2+).

Zn(2+) serves as cofactor.

The sequence is that of Probable metallo-hydrolase M6_Spy0554 from Streptococcus pyogenes serotype M6 (strain ATCC BAA-946 / MGAS10394).